Reading from the N-terminus, the 85-residue chain is U1-theraphotoxin-Hs1a (85 aa).

An N-terminal signal peptide occupies residues 1-22; sequence MKVTLIAILTCAAVLVLHTTAA. Positions 23–48 are excised as a propeptide; that stretch reads EELEAESQLMEVGMPDTELAAVDEER. Intrachain disulfides connect Cys52/Cys66, Cys56/Cys77, and Cys71/Cys82.

Heterodimer composed of the two variants Ile-58 and Gln-58. Expressed by the venom gland.

Its subcellular location is the secreted. Functionally, lethal neurotoxin that blocks neuromuscular transmission. Acts cooperatively to potentiate the activity of huwentoxin-I. This toxin is active against insects. The chain is U1-theraphotoxin-Hs1a from Cyriopagopus schmidti (Chinese bird spider).